We begin with the raw amino-acid sequence, 370 residues long: Early nodulin-like protein 1 (370 aa).

An N-terminal signal peptide occupies residues 1–27; sequence MSAIMKSLCFSFLILASFATFFSVADA. Residues 28–129 form the Phytocyanin domain; that stretch reads WRFNVGGNGA…GQKLIVVVLA (102 aa). A glycan (N-linked (GlcNAc...) asparagine) is linked at Asn-58. Cys-83 and Cys-117 are joined by a disulfide. Residues 135-175 are compositionally biased toward low complexity; the sequence is SAPAHSPVPSVSPTQPPKSHSPVSPVAPASAPSKSQPPRSS. Positions 135–347 are disordered; the sequence is SAPAHSPVPS…PAPSPRTNSA (213 aa). Positions 176 to 194 are enriched in polar residues; that stretch reads VSPAQPPKSSSPISHTPAL. Low complexity-rich tracts occupy residues 195-205 and 215-290; these read SPSHATSHSPA and SPVS…QSPA. A compositionally biased stretch (pro residues) spans 291-305; that stretch reads TPSPMTPQSPSPVSS. The span at 306–318 shows a compositional bias: low complexity; the sequence is PSPDQSAAPSDQS. Polar residues predominate over residues 319-334; it reads TPLAPSPSETTPTADN. N-linked (GlcNAc...) asparagine glycosylation occurs at Asn-334. Asn-345 carries GPI-anchor amidated asparagine lipidation. Residues 346–370 constitute a propeptide, removed in mature form; sequence SASGLAVTSVMSTLFSATFTFLMFA.

It belongs to the early nodulin-like (ENODL) family. In terms of tissue distribution, mostly expressed in stems, leaves and flowers, and, to a lower extent, in seedlings, roots and seeds.

It localises to the cell membrane. May act as a carbohydrate transporter. In Arabidopsis thaliana (Mouse-ear cress), this protein is Early nodulin-like protein 1.